A 335-amino-acid polypeptide reads, in one-letter code: UPF0353 protein MLBr01808 (335 aa).

2 helical membrane passes run 18 to 38 (WFFL…MMQV) and 67 to 87 (VPAI…AGPT). Residues 98-294 (VVMLVIDVSQ…AELKAVYASL (197 aa)) form the VWFA domain. A helical membrane pass occupies residues 309-329 (AGWLRLGVLVLALAALTALLI).

The protein belongs to the UPF0353 family.

The protein resides in the cell membrane. This is UPF0353 protein MLBr01808 from Mycobacterium leprae (strain Br4923).